The following is a 118-amino-acid chain: Ribonuclease P protein component (118 aa).

This sequence belongs to the RnpA family. As to quaternary structure, consists of a catalytic RNA component (M1 or rnpB) and a protein subunit.

The catalysed reaction is Endonucleolytic cleavage of RNA, removing 5'-extranucleotides from tRNA precursor.. Functionally, RNaseP catalyzes the removal of the 5'-leader sequence from pre-tRNA to produce the mature 5'-terminus. It can also cleave other RNA substrates such as 4.5S RNA. The protein component plays an auxiliary but essential role in vivo by binding to the 5'-leader sequence and broadening the substrate specificity of the ribozyme. The chain is Ribonuclease P protein component from Shewanella denitrificans (strain OS217 / ATCC BAA-1090 / DSM 15013).